A 187-amino-acid chain; its full sequence is Protein GrpE (187 aa).

The segment covering 1–11 (MTDSSNEHETE) has biased composition (basic and acidic residues). Residues 1 to 23 (MTDSSNEHETENPSVPNPDNEIQ) form a disordered region.

This sequence belongs to the GrpE family. As to quaternary structure, homodimer.

The protein localises to the cytoplasm. Participates actively in the response to hyperosmotic and heat shock by preventing the aggregation of stress-denatured proteins, in association with DnaK and GrpE. It is the nucleotide exchange factor for DnaK and may function as a thermosensor. Unfolded proteins bind initially to DnaJ; upon interaction with the DnaJ-bound protein, DnaK hydrolyzes its bound ATP, resulting in the formation of a stable complex. GrpE releases ADP from DnaK; ATP binding to DnaK triggers the release of the substrate protein, thus completing the reaction cycle. Several rounds of ATP-dependent interactions between DnaJ, DnaK and GrpE are required for fully efficient folding. The protein is Protein GrpE of Chlamydia felis (strain Fe/C-56) (Chlamydophila felis).